The primary structure comprises 212 residues: Dihydrophenazinedicarboxylate synthase (212 aa).

Substrate is bound at residue Ser-8. Residues 63–66 and 78–79 contribute to the FMN site; these read RVIA and CT. His-80 lines the substrate pocket. FMN-binding positions include 84–85 and Gln-107; that span reads RK. Substrate-binding residues include Arg-129 and Ser-137. FMN is bound by residues 142–143 and Arg-195; that span reads QS.

Belongs to the pyridoxamine 5'-phosphate oxidase family. FMN is required as a cofactor.

It catalyses the reaction (1R,6R)-1,4,5,5a,6,9-hexahydrophenazine-1,6-dicarboxylate + O2 = (1R,10aS)-1,4,10,10a-tetrahydrophenazine-1,6-dicarboxylate + H2O2. It carries out the reaction (1R,10aS)-1,4,10,10a-tetrahydrophenazine-1,6-dicarboxylate + O2 = (5aS)-5,5a-dihydrophenazine-1,6-dicarboxylate + H2O2. The catalysed reaction is (1R,10aS)-1,4,10,10a-tetrahydrophenazine-1-carboxylate + O2 = (10aS)-10,10a-dihydrophenazine-1-carboxylate + H2O2. The enzyme catalyses (1R)-1,4,5,10-tetrahydrophenazine-1-carboxylate + O2 = (10aS)-10,10a-dihydrophenazine-1-carboxylate + H2O2. Its pathway is antibiotic biosynthesis; phenazine biosynthesis. In terms of biological role, involved in the biosynthesis of the antibiotic phenazine, a nitrogen-containing heterocyclic molecule having important roles in virulence, competition and biological control. Catalyzes several oxidations in the terminal steps of core phenazine biosynthesis. It oxidizes both hexahydrophenazine-1,6-dicarboxylic acid (HHPDC) and tetrahydrophenazine-1-carboxylic acid (THPCA) and thereby contributes to the generation of both phenazine-1,6-dicarboxylic acid (PDC) and phenazine-1-carboxylic acid (PCA). It synthesizes phenazines in their reduced form, which are the likely end products in vivo. This is Dihydrophenazinedicarboxylate synthase from Burkholderia lata (strain ATCC 17760 / DSM 23089 / LMG 22485 / NCIMB 9086 / R18194 / 383).